The following is a 166-amino-acid chain: SsrA-binding protein (166 aa).

Residues 143–166 are disordered; it reads HDKREDDKRKQANRDMKSALARYR. Residues 144–159 are compositionally biased toward basic and acidic residues; sequence DKREDDKRKQANRDMK.

It belongs to the SmpB family.

It localises to the cytoplasm. Required for rescue of stalled ribosomes mediated by trans-translation. Binds to transfer-messenger RNA (tmRNA), required for stable association of tmRNA with ribosomes. tmRNA and SmpB together mimic tRNA shape, replacing the anticodon stem-loop with SmpB. tmRNA is encoded by the ssrA gene; the 2 termini fold to resemble tRNA(Ala) and it encodes a 'tag peptide', a short internal open reading frame. During trans-translation Ala-aminoacylated tmRNA acts like a tRNA, entering the A-site of stalled ribosomes, displacing the stalled mRNA. The ribosome then switches to translate the ORF on the tmRNA; the nascent peptide is terminated with the 'tag peptide' encoded by the tmRNA and targeted for degradation. The ribosome is freed to recommence translation, which seems to be the essential function of trans-translation. The polypeptide is SsrA-binding protein (Prochlorococcus marinus (strain MIT 9211)).